The following is an 86-amino-acid chain: High affinity immunoglobulin epsilon receptor subunit gamma (86 aa).

Positions 1–18 (MIPAVVLLLLLLVEQAAA) are cleaved as a signal peptide. At 19–23 (LGEPQ) the chain is on the extracellular side. A helical membrane pass occupies residues 24–44 (LCYILDAILFLYGIVLTLLYC). The Cytoplasmic portion of the chain corresponds to 45–86 (RLKLQVRKAAIDSYEKSDGVYTGLSTRNQETYETLKHEKPPQ). Residues 54 to 82 (AIDSYEKSDGVYTGLSTRNQETYETLKHE) enclose the ITAM domain. At Tyr-65 the chain carries Phosphotyrosine. Residue Ser-69 is modified to Phosphoserine. A Phosphotyrosine modification is found at Tyr-76. A Phosphothreonine modification is found at Thr-78.

Belongs to the CD3Z/FCER1G family. IgE Fc receptor is a tetramer of an alpha chain, a beta chain, and two disulfide linked gamma chains. Associates with FCGR1A; forms a functional signaling complex. The signaling subunit of immunoglobulin gamma (IgG) Fc receptor complex. As a homodimer or a heterodimer of CD247 and FCER1G, associates with the ligand binding subunit FCGR3A to form a functional receptor complex. Associates with CLEC6A. Interacts with CLEC4E. Interacts (via ITAM domain) with SYK (via SH2 domains); activates SYK, enabling integrin-mediated activation of neutrophils and macrophages. Interacts with common beta chain of interleukin 3 receptor CSF2RB and recruits SYK in response to IL3 stimulation; this interaction is direct. Interacts with CD300LH; the interaction may be indirect. Interacts with CD300LD. Interacts with TARM1.

It is found in the cell membrane. Its function is as follows. Adapter protein containing an immunoreceptor tyrosine-based activation motif (ITAM) that transduces activation signals from various immunoreceptors. As a component of the high-affinity immunoglobulin E (IgE) receptor, mediates allergic inflammatory signaling in mast cells. As a constitutive component of interleukin-3 receptor complex, selectively mediates interleukin 4/IL4 production b basophils priming T-cells toward effector T-helper 2 subset. Associates with pattern recognition receptors CLEC4D and CLEC4E to form a functional signaling complex in myeloid cells. Binding of mycobacterial trehalose 6,6'-dimycolate (TDM) to this receptor complex leads to phosphorylation of ITAM, triggering activation of SYK, CARD9 and NF-kappa-B, consequently driving maturation of antigen-presenting cells and shaping antigen-specific priming of T-cells toward effector T-helper 1 and T-helper 17 cell subtypes. May function cooperatively with other activating receptors. Functionally linked to integrin beta-2/ITGB2-mediated neutrophil activation. Also involved in integrin alpha-2/ITGA2-mediated platelet activation. The polypeptide is High affinity immunoglobulin epsilon receptor subunit gamma (FCER1G) (Sus scrofa (Pig)).